The chain runs to 95 residues: Small ribosomal subunit protein bS18 (95 aa).

This sequence belongs to the bacterial ribosomal protein bS18 family. As to quaternary structure, part of the 30S ribosomal subunit. Forms a tight heterodimer with protein bS6.

Binds as a heterodimer with protein bS6 to the central domain of the 16S rRNA, where it helps stabilize the platform of the 30S subunit. The protein is Small ribosomal subunit protein bS18 of Rickettsia akari (strain Hartford).